We begin with the raw amino-acid sequence, 459 residues long: Cysteine--tRNA ligase (459 aa).

Cys31 contacts Zn(2+). Residues 33 to 43 (PTVYYNPHIGN) carry the 'HIGH' region motif. Zn(2+)-binding residues include Cys216, His241, and Glu245. The 'KMSKS' region signature appears at 274–278 (KMSKS). Residue Lys277 coordinates ATP.

It belongs to the class-I aminoacyl-tRNA synthetase family. As to quaternary structure, monomer. Zn(2+) serves as cofactor.

The protein resides in the cytoplasm. The enzyme catalyses tRNA(Cys) + L-cysteine + ATP = L-cysteinyl-tRNA(Cys) + AMP + diphosphate. This is Cysteine--tRNA ligase from Rickettsia conorii (strain ATCC VR-613 / Malish 7).